A 1042-amino-acid polypeptide reads, in one-letter code: Sarcoplasmic/endoplasmic reticulum calcium ATPase 2 (1042 aa).

The Cytoplasmic portion of the chain corresponds to 1 to 48 (MENAHTKTVEEVLGHFGVNESTGLSLEQVKKLKERWGSNELPAEEGKT). S38 is modified (phosphoserine). The helical transmembrane segment at 49 to 69 (LLELVIEQFEDLLVRILLLAA) threads the bilayer. The Lumenal portion of the chain corresponds to 70–89 (CISFVLAWFEEGEETITAFV). A helical membrane pass occupies residues 90–110 (EPFVILLILVANAIVGVWQER). At 111 to 253 (NAENAIEALK…QERTPLQQKL (143 aa)) the chain is on the cytoplasmic side. A helical transmembrane segment spans residues 254–273 (DEFGEQLSKVISLICIAVWI). The Lumenal portion of the chain corresponds to 274–295 (INIGHFNDPVHGGSWIRGAIYY). 3'-nitrotyrosine is present on residues Y294 and Y295. The chain crosses the membrane as a helical span at residues 296-313 (FKIAVALAVAAIPEGLPA). Ca(2+)-binding residues include V304, A305, I307, and E309. Topologically, residues 314-756 (VITTCLALGT…EEGRAIYNNM (443 aa)) are cytoplasmic. The active-site 4-aspartylphosphate intermediate is the D351. D351 and T353 together coordinate Mg(2+). ATP is bound at residue T353. Position 441 is a phosphothreonine (T441). Residues E442, R489, and K514 each coordinate ATP. S531 is modified (phosphoserine). Residue R559 participates in ATP binding. Residues 575 to 594 (MNLEDSANFIKYETNLTFVG) form an interaction with HAX1 region. Residue S580 is modified to Phosphoserine. T624, G625, and D626 together coordinate ATP. S663 carries the phosphoserine modification. ATP contacts are provided by R677 and K683. Position 702 (D702) interacts with Mg(2+). ATP is bound at residue N705. The helical transmembrane segment at 757–776 (KQFIRYLISSNVGEVVCIFL) threads the bilayer. Residues N767 and E770 each coordinate Ca(2+). The Lumenal portion of the chain corresponds to 777 to 786 (TAALGFPEAL). Residues 787–807 (IPVQLLWVNLVTDGLPATALG) traverse the membrane as a helical segment. The interaction with PLN stretch occupies residues 787 to 807 (IPVQLLWVNLVTDGLPATALG). The tract at residues 788–1042 (PVQLLWVNLV…DTNFSDMFWS (255 aa)) is interaction with TMEM64 and PDIA3. The Ca(2+) site is built by N795, T798, and D799. The Cytoplasmic portion of the chain corresponds to 808 to 827 (FNPPDLDIMNKPPRNPKEPL). A helical transmembrane segment spans residues 828–850 (ISGWLFFRYLAIGCYVGAATVGA). The Lumenal portion of the chain corresponds to 851–896 (AAWWFIAADGGPRVTFYQLSHFLQCKEDNPDFEGVDCAVFESPYPM). Residues C875 and C887 are joined by a disulfide bond. The chain crosses the membrane as a helical span at residues 897–916 (TMALSVLVTIEMCNALNSLS). Residue E907 coordinates Ca(2+). At 917-929 (ENQSLLRMPPWEN) the chain is on the cytoplasmic side. Residues 930 to 948 (IWLVGSICLSMSLHFLILY) traverse the membrane as a helical segment. Positions 931 to 942 (WLVGSICLSMSL) are interaction with PLN. Over 949-963 (VEPLPLIFQITPLNL) the chain is Lumenal. The helical transmembrane segment at 964–984 (TQWLMVLKISLPVILMDETLK) threads the bilayer. The Cytoplasmic segment spans residues 985–1042 (FVARNYLEPGKECVQPATKSCSFSACTDGISWPFVLLIMPLVIWVYSTDTNFSDMFWS).

This sequence belongs to the cation transport ATPase (P-type) (TC 3.A.3) family. Type IIA subfamily. As to quaternary structure, interacts with sarcolipin (SLN); the interaction inhibits ATP2A2 Ca(2+) affinity. Interacts with phospholamban (PLN); the interaction inhibits ATP2A2 Ca(2+) affinity. Interacts with myoregulin (MRLN). Interacts with ARLN and ERLN; the interactions inhibit ATP2A2 Ca(2+) affinity. Interacts with STRIT1/DWORF; the interaction results in activation of ATP2A2. Interacts with the monomeric forms of SLN, PLN, ARLN, ERLN and STRI1/DWORF. Interacts with HAX1. Interacts with S100A8 and S100A9. Interacts with SLC35G1 and STIM1. Interacts with TMEM203. Interacts with TMEM64 and PDIA3. Interacts with TMX1. Interacts with TMX2. Interacts with VMP1; VMP1 competes with PLN and SLN to prevent them from forming an inhibitory complex with ATP2A2. Interacts with ULK1. Interacts with S100A1 in a Ca(2+)-dependent manner. Interacts with TUNAR. Interacts with FLVCR2; this interaction occurs in the absence of heme and promotes ATP2A2 proteasomal degradation; this complex is dissociated upon heme binding. Interacts with FNIP1. Interacts with TRAM2 (via C-terminus). Requires Mg(2+) as cofactor. Nitrated under oxidative stress. Nitration on the two tyrosine residues inhibits catalytic activity. Post-translationally, serotonylated on Gln residues by TGM2 in response to hypoxia, leading to its inactivation. As to expression, detected in heart left ventricle (at protein level). Isoform 2 is highly expressed in heart and slow twitch skeletal muscle. Isoform 1 is widely expressed.

The protein resides in the endoplasmic reticulum membrane. It localises to the sarcoplasmic reticulum membrane. It carries out the reaction Ca(2+)(in) + ATP + H2O = Ca(2+)(out) + ADP + phosphate + H(+). Has different conformational states with differential Ca2+ affinity. The E1 conformational state (active form) shows high Ca(2+) affinity, while the E2 state exhibits low Ca(2+) affinity. Binding of ATP allosterically increases its affinity for subsequent binding of Ca2+. Reversibly inhibited by phospholamban (PLN) at low calcium concentrations. PLN inhibits ATP2A2 Ca(2+) affinity by disrupting its allosteric activation by ATP. Inhibited by sarcolipin (SLN) and myoregulin (MRLN). The inhibition is blocked by VMP1. Enhanced by STRIT1/DWORF; STRIT1 increases activity by displacing sarcolipin (SLN), phospholamban (PLN) and myoregulin (MRLN). Stabilizes SERCA2 in its E2 state. In terms of biological role, this magnesium-dependent enzyme catalyzes the hydrolysis of ATP coupled with the translocation of calcium from the cytosol to the sarcoplasmic reticulum lumen. Involved in autophagy in response to starvation. Upon interaction with VMP1 and activation, controls ER-isolation membrane contacts for autophagosome formation. Also modulates ER contacts with lipid droplets, mitochondria and endosomes. In coordination with FLVCR2 mediates heme-stimulated switching from mitochondrial ATP synthesis to thermogenesis. Its function is as follows. Involved in the regulation of the contraction/relaxation cycle. Acts as a regulator of TNFSF11-mediated Ca(2+) signaling pathways via its interaction with TMEM64 which is critical for the TNFSF11-induced CREB1 activation and mitochondrial ROS generation necessary for proper osteoclast generation. Association between TMEM64 and SERCA2 in the ER leads to cytosolic Ca(2+) spiking for activation of NFATC1 and production of mitochondrial ROS, thereby triggering Ca(2+) signaling cascades that promote osteoclast differentiation and activation. This Sus scrofa (Pig) protein is Sarcoplasmic/endoplasmic reticulum calcium ATPase 2 (ATP2A2).